A 141-amino-acid polypeptide reads, in one-letter code: Mite group 2 allergen Lep d 2 (141 aa).

The N-terminal stretch at 1 to 16 (MMKFIALFALVAVASA) is a signal peptide. 3 disulfides stabilise this stretch: Cys-24–Cys-133, Cys-37–Cys-42, and Cys-88–Cys-93. 3 consecutive repeat copies span residues 64 to 65 (KV), 68 to 69 (KV), and 72 to 73 (KV). Residues 64–73 (KVTIKVLAKV) form a 3 X 2 AA repeats of K-V region.

Belongs to the NPC2 family. As to quaternary structure, monomer.

The protein localises to the secreted. This Lepidoglyphus destructor (Storage mite) protein is Mite group 2 allergen Lep d 2.